Here is a 129-residue protein sequence, read N- to C-terminus: Cytochrome c oxidase subunit 5B, mitochondrial (129 aa).

The transit peptide at 1 to 31 (MASRLLRGVGALAAQALRAHGPRGVAATRSM) directs the protein to the mitochondrion. Lys-68 and Lys-86 each carry N6-acetyllysine. The Zn(2+) site is built by Cys-91, Cys-93, Cys-113, and Cys-116. Lys-121 is modified (N6-acetyllysine).

The protein belongs to the cytochrome c oxidase subunit 5B family. As to quaternary structure, component of the cytochrome c oxidase (complex IV, CIV), a multisubunit enzyme composed of 14 subunits. The complex is composed of a catalytic core of 3 subunits MT-CO1, MT-CO2 and MT-CO3, encoded in the mitochondrial DNA, and 11 supernumerary subunits COX4I, COX5A, COX5B, COX6A, COX6B, COX6C, COX7A, COX7B, COX7C, COX8 and NDUFA4, which are encoded in the nuclear genome. The complex exists as a monomer or a dimer and forms supercomplexes (SCs) in the inner mitochondrial membrane with NADH-ubiquinone oxidoreductase (complex I, CI) and ubiquinol-cytochrome c oxidoreductase (cytochrome b-c1 complex, complex III, CIII), resulting in different assemblies (supercomplex SCI(1)III(2)IV(1) and megacomplex MCI(2)III(2)IV(2)).

The protein localises to the mitochondrion inner membrane. It functions in the pathway energy metabolism; oxidative phosphorylation. Functionally, component of the cytochrome c oxidase, the last enzyme in the mitochondrial electron transport chain which drives oxidative phosphorylation. The respiratory chain contains 3 multisubunit complexes succinate dehydrogenase (complex II, CII), ubiquinol-cytochrome c oxidoreductase (cytochrome b-c1 complex, complex III, CIII) and cytochrome c oxidase (complex IV, CIV), that cooperate to transfer electrons derived from NADH and succinate to molecular oxygen, creating an electrochemical gradient over the inner membrane that drives transmembrane transport and the ATP synthase. Cytochrome c oxidase is the component of the respiratory chain that catalyzes the reduction of oxygen to water. Electrons originating from reduced cytochrome c in the intermembrane space (IMS) are transferred via the dinuclear copper A center (CU(A)) of subunit 2 and heme A of subunit 1 to the active site in subunit 1, a binuclear center (BNC) formed by heme A3 and copper B (CU(B)). The BNC reduces molecular oxygen to 2 water molecules using 4 electrons from cytochrome c in the IMS and 4 protons from the mitochondrial matrix. The chain is Cytochrome c oxidase subunit 5B, mitochondrial (Cox5b) from Rattus norvegicus (Rat).